The chain runs to 755 residues: DNA ligase 1 (755 aa).

The N-terminal 44 residues, 1–44 (MRRLLTGCLLSSARPLKSRLPLLMSSSLPSSAGKKPKQATLARF), are a transit peptide targeting the mitochondrion. Arg-2 carries the post-translational modification N-acetylserine. Positions 47–60 (SMKNKPTEGTPSPK) are enriched in polar residues. 2 disordered regions span residues 47 to 79 (SMKN…GEEE) and 97 to 127 (PSSM…QRLV). 2 positions are modified to phosphoserine: Ser-58 and Ser-75. Over residues 102 to 114 (SNFSSIPSSAPSS) the composition is skewed to low complexity. Ser-119 and Ser-123 each carry phosphoserine. The interaction with target DNA stretch occupies residues 309-318 (KLRIGLAEKT). Residue Glu-417 coordinates ATP. Catalysis depends on Lys-419, which acts as the N6-AMP-lysine intermediate. Residues Arg-424 and Arg-440 each coordinate ATP. Glu-472 contacts Mg(2+). The interval 493–495 (KRK) is interaction with target DNA. Glu-571 is a binding site for Mg(2+). ATP-binding residues include Lys-576, Arg-590, and Lys-596.

Belongs to the ATP-dependent DNA ligase family. Mg(2+) is required as a cofactor.

Its subcellular location is the mitochondrion. It is found in the nucleus. It carries out the reaction ATP + (deoxyribonucleotide)n-3'-hydroxyl + 5'-phospho-(deoxyribonucleotide)m = (deoxyribonucleotide)n+m + AMP + diphosphate.. In terms of biological role, DNA ligase that seals nicks in double-stranded DNA during DNA replication, DNA recombination and DNA repair. The mitochondrial form is required for mitochondrial DNA maintenance but is non-essential while the nuclear form is essential for cell viability. The chain is DNA ligase 1 (CDC9) from Saccharomyces cerevisiae (strain ATCC 204508 / S288c) (Baker's yeast).